The chain runs to 587 residues: Transport inhibitor response 1-like protein Os05g0150500 (587 aa).

One can recognise an F-box domain in the interval 6 to 63 (SRAACAAAAPPWHSLPDEVWEHAFSFLPAAADRGAAAGACSSWLRAERRSRRRLAVAN). 1D-myo-inositol hexakisphosphate is bound at residue lysine 85. The tract at residues 92–93 (DF) is interaction with auxin-responsive proteins. 1D-myo-inositol hexakisphosphate-binding positions include 124-125 (KR) and arginine 355. Positions 358–363 (PSDPFG) are interaction with auxin-responsive proteins. Residue 409–411 (CFR) coordinates 1D-myo-inositol hexakisphosphate. Positions 413–417 (CILEP) are interaction with auxin-responsive proteins. A 1D-myo-inositol hexakisphosphate-binding site is contributed by arginine 444. An interaction with auxin-responsive proteins region spans residues 472–473 (AF). 1D-myo-inositol hexakisphosphate-binding positions include 492-493 (KK) and arginine 517.

Part of a SCF (SKP1-cullin-F-box) protein ligase complex. May interact with auxin and auxin-responsive proteins.

It is found in the nucleus. The protein operates within protein modification; protein ubiquitination. The polypeptide is Transport inhibitor response 1-like protein Os05g0150500 (Oryza sativa subsp. japonica (Rice)).